Here is a 159-residue protein sequence, read N- to C-terminus: Cathelicidin-5 (159 aa).

The N-terminal stretch at 1–29 (METQRASLSLGRWSLWLLLLGLALPSASA) is a signal peptide. Residue Gln30 is modified to Pyrrolidone carboxylic acid. The propeptide occupies 30–131 (QALSYREAVL…DITCAVPQSV (102 aa)). 2 disulfide bridges follow: Cys86–Cys97 and Cys108–Cys125.

Belongs to the cathelicidin family.

Its subcellular location is the secreted. Its function is as follows. Exerts a potent antimicrobial activity against Gram-negative and Gram-positive bacteria, including methicillin-resistant Staphylococcus aureus, and fungi. This Bos taurus (Bovine) protein is Cathelicidin-5 (CATHL5).